The following is a 224-amino-acid chain: Mammalian ependymin-related protein 1 (224 aa).

The signal sequence occupies residues 1–37 (MPGRAPLRTVPGALGAWLLGGLWAWTLCGLCSLGAVG). Intrachain disulfides connect C42–C172, C88–C222, and C113–C210. 2 N-linked (GlcNAc...) asparagine glycosylation sites follow: N130 and N182.

This sequence belongs to the ependymin family. Homodimer. Post-translationally, N-glycosylated; the glycan contains mannose-6-phosphate moieties. In terms of tissue distribution, ubiquitous. Detected in brain, heart, skeletal muscle, kidney, testis, ovary and prostate.

It localises to the lysosome lumen. The protein resides in the secreted. In terms of biological role, binds anionic lipids and gangliosides at acidic pH. This chain is Mammalian ependymin-related protein 1 (EPDR1), found in Homo sapiens (Human).